The sequence spans 364 residues: DNA polymerase IV (364 aa).

The 185-residue stretch at 14–198 folds into the UmuC domain; that stretch reads IIHIDMDAFF…LPIEKFHGVG (185 aa). Mg(2+)-binding residues include Asp-18 and Asp-116. The active site involves Glu-117.

Belongs to the DNA polymerase type-Y family. As to quaternary structure, monomer. Mg(2+) is required as a cofactor.

Its subcellular location is the cytoplasm. The catalysed reaction is DNA(n) + a 2'-deoxyribonucleoside 5'-triphosphate = DNA(n+1) + diphosphate. Functionally, poorly processive, error-prone DNA polymerase involved in untargeted mutagenesis. Copies undamaged DNA at stalled replication forks, which arise in vivo from mismatched or misaligned primer ends. These misaligned primers can be extended by PolIV. Exhibits no 3'-5' exonuclease (proofreading) activity. May be involved in translesional synthesis, in conjunction with the beta clamp from PolIII. The chain is DNA polymerase IV from Streptococcus pyogenes serotype M6 (strain ATCC BAA-946 / MGAS10394).